The following is a 1574-amino-acid chain: Disco-interacting protein 2 homolog B (1574 aa).

A phosphoserine mark is found at serine 9, serine 50, and serine 53. One can recognise a DMAP1-binding domain in the interval 12–130 (AVAALPPEVR…PMPTKRRSTF (119 aa)). Residues 31-166 (LSEGDITQKG…AALSAALQQS (136 aa)) are disordered. Polar residues predominate over residues 52 to 62 (YSPQTQETDSI). Residues 69–82 (QTPAPTAAQTSAPS) are compositionally biased toward low complexity. The residue at position 70 (threonine 70) is a Phosphothreonine. The span at 91–103 (GARDERYRSDIHT) shows a compositional bias: basic and acidic residues. Serine 99 carries the phosphoserine modification. Phosphothreonine is present on threonine 139. A phosphoserine mark is found at serine 145, serine 147, and serine 152. Residues 154 to 166 (RRQAALSAALQQS) are compositionally biased toward low complexity. 3 positions are modified to phosphoserine: serine 177, serine 192, and serine 202. The segment at 178–200 (IQGSSTSSSASSTLSHGEVKGTS) is disordered. The segment covering 181-192 (SSTSSSASSTLS) has biased composition (low complexity). The tract at residues 217–244 (APPDVTATTSSSSSSLRPANIDLPPSGI) is disordered. Serine 256 is subject to Phosphoserine.

Belongs to the DIP2 family. In terms of assembly, interacts with alpha-tubulin. Highly expressed in brain and spinal cord (at protein level). In brain, expression is detected in the main olfactory bulb, cortex, lateral ventricle, cornu ammonis 1, cornu ammonis 3, dentate gyrus, striatum, cerebellar cortex and medial habenula. Expressed primarily in neurons including excitatory pyramidal neurons and inhibitory interneurons.

The protein resides in the cell projection. It localises to the dendrite. The protein localises to the axon. Its subcellular location is the perikaryon. Its function is as follows. Negatively regulates axonal outgrowth and is essential for normal synaptic transmission. Not required for regulation of axon polarity. Promotes acetylation of alpha-tubulin. This Mus musculus (Mouse) protein is Disco-interacting protein 2 homolog B (Dip2b).